The sequence spans 295 residues: Proline-rich protein 18 (295 aa).

Positions 1–13 are enriched in pro residues; it reads MPFPPMPPPPAPA. Residues 1–133 are disordered; it reads MPFPPMPPPP…GAGPCPDSAA (133 aa). Low complexity predominate over residues 14-29; the sequence is PGAQAARQLPRRPCAA. At Ser47 the chain carries Phosphoserine. Arg83 bears the Omega-N-methylarginine mark. Low complexity predominate over residues 103–126; it reads ARTTYAATSAGTGTTAAGTSSGAG. Arg172 bears the Asymmetric dimethylarginine mark. Residues 181-192 show a composition bias toward low complexity; that stretch reads ARAAGPRRGGPA. Residues 181–227 form a disordered region; that stretch reads ARAAGPRRGGPASDPDAPPTAGQGRRAPPPGAQLLHGGLQVPQLSPR. An Omega-N-methylarginine modification is found at Arg188.

This chain is Proline-rich protein 18 (PRR18), found in Homo sapiens (Human).